Reading from the N-terminus, the 286-residue chain is Energy-coupling factor transporter ATP-binding protein EcfA2 (286 aa).

Residues 3–244 (IKVENVSFIY…AERLEKIGLS (242 aa)) enclose the ABC transporter domain. 40–47 (GHTGSGKS) lines the ATP pocket.

This sequence belongs to the ABC transporter superfamily. Energy-coupling factor EcfA family. In terms of assembly, forms a stable energy-coupling factor (ECF) transporter complex composed of 2 membrane-embedded substrate-binding proteins (S component), 2 ATP-binding proteins (A component) and 2 transmembrane proteins (T component).

The protein resides in the cell membrane. Functionally, ATP-binding (A) component of a common energy-coupling factor (ECF) ABC-transporter complex. Unlike classic ABC transporters this ECF transporter provides the energy necessary to transport a number of different substrates. In Caldanaerobacter subterraneus subsp. tengcongensis (strain DSM 15242 / JCM 11007 / NBRC 100824 / MB4) (Thermoanaerobacter tengcongensis), this protein is Energy-coupling factor transporter ATP-binding protein EcfA2.